Here is a 246-residue protein sequence, read N- to C-terminus: tRNA (guanine-N(1)-)-methyltransferase (246 aa).

S-adenosyl-L-methionine is bound by residues glycine 113 and 133–138 (IGDFVM).

Belongs to the RNA methyltransferase TrmD family. Homodimer.

The protein resides in the cytoplasm. It catalyses the reaction guanosine(37) in tRNA + S-adenosyl-L-methionine = N(1)-methylguanosine(37) in tRNA + S-adenosyl-L-homocysteine + H(+). In terms of biological role, specifically methylates guanosine-37 in various tRNAs. The sequence is that of tRNA (guanine-N(1)-)-methyltransferase from Vibrio atlanticus (strain LGP32) (Vibrio splendidus (strain Mel32)).